A 291-amino-acid polypeptide reads, in one-letter code: ADP-dependent (S)-NAD(P)H-hydrate dehydratase (291 aa).

In terms of domain architecture, YjeF C-terminal spans 5 to 273 (SKDILEEVIT…QALPTYMKKY (269 aa)). 3 residues coordinate (6S)-NADPHX: A40, G103, and H153. AMP is bound at residue G215. A (6S)-NADPHX-binding site is contributed by D216.

The protein belongs to the NnrD/CARKD family. In terms of assembly, homotetramer. Mg(2+) is required as a cofactor.

The catalysed reaction is (6S)-NADHX + ADP = AMP + phosphate + NADH + H(+). The enzyme catalyses (6S)-NADPHX + ADP = AMP + phosphate + NADPH + H(+). Catalyzes the dehydration of the S-form of NAD(P)HX at the expense of ADP, which is converted to AMP. Together with NAD(P)HX epimerase, which catalyzes the epimerization of the S- and R-forms, the enzyme allows the repair of both epimers of NAD(P)HX, a damaged form of NAD(P)H that is a result of enzymatic or heat-dependent hydration. This chain is ADP-dependent (S)-NAD(P)H-hydrate dehydratase, found in Enterococcus faecalis (strain ATCC 700802 / V583).